Consider the following 35-residue polypeptide: Beta/delta-theraphotoxin-Pre1a (35 aa).

3 cysteine pairs are disulfide-bonded: Cys-3-Cys-18, Cys-10-Cys-23, and Cys-17-Cys-30.

The protein belongs to the neurotoxin 10 (Hwtx-1) family. Expressed by the venom gland.

It is found in the secreted. Functionally, gating-modifier toxin that both inhibits the peak current of human Nav1.1/SCN1A, rat Nav1.2/SCN2A, human Nav1.6/SCN8A, and human Nav1.7/SCN9A and concurrently inhibits fast inactivation of human Nav1.1 and rat Nav1.3/SCN3A. The relative rank order potency for Nav modulation is Nav1.3 (inactivation EC(50)=45 nM) &gt; Nav1.7 &gt; Nav1.2 &gt; Nav1.1 (inactivation) &gt; Nav1.1 &gt; Nav1.6 &gt; Nav1.3 (IC(50)=8 uM). The DII and DIV S3-S4 loops of Nav channel voltage sensors are important for the interaction of this toxin with Nav channels but cannot account for its unique subtype selectivity. It is the variability of the S1-S2 loops between NaV channels which contributes substantially to the selectivity profile observed for this toxin, particularly with regards to fast inactivation. This toxin may bind the channel in the resting state. The protein is Beta/delta-theraphotoxin-Pre1a of Psalmopoeus reduncus (Costa Rican orangemouth tarantula).